Consider the following 422-residue polypeptide: Steroid hormone receptor ERR1 (422 aa).

The interval 1–67 (MSSQVVGIEP…GAGPGEQGGG (67 aa)) is disordered. A phosphoserine mark is found at serine 19 and serine 22. Residues 58 to 67 (GAGPGEQGGG) show a composition bias toward gly residues. Residues 76-151 (KRLCLVCGDV…VGMLKEGVRL (76 aa)) constitute a DNA-binding region (nuclear receptor). NR C4-type zinc fingers lie at residues 79–99 (CLVCGDVASGYHYGVASCEAC) and 115–134 (CPASNECEITKRRRKACQAC). N6-acetyllysine; by PCAF/KAT2B occurs at positions 129, 138, 160, and 162. Residues lysine 189 and lysine 402 each participate in a glycyl lysine isopeptide (Lys-Gly) (interchain with G-Cter in SUMO2) cross-link. In terms of domain architecture, NR LBD spans 192–420 (PVNALVSHLL…KLFLEMLEAM (229 aa)).

It belongs to the nuclear hormone receptor family. NR3 subfamily. In terms of assembly, binds DNA as a monomer or a homodimer. Interacts (via the AF2 domain) with coactivator PPARGC1A (via the L3 motif); the interaction greatly enhances transcriptional activity of genes involved in energy metabolism. Interacts with PIAS4; the interaction enhances sumoylation. Interacts with MAPK15; promotes re-localization of ESRRA to the cytoplasm through a XPO1-dependent mechanism then inhibits ESRRA transcriptional activity. Post-translationally, phosphorylation on Ser-19 enhances sumoylation on Lys-14 increasing repression of transcriptional activity. Sumoylated with SUMO2. Main site is Lys-14 which is enhanced by phosphorylation on Ser-19, cofactor activation, and by interaction with PIAS4. Sumoylation enhances repression of transcriptional activity, but has no effect on subcellular location nor on DNA binding. In terms of processing, reversibly acetylated. Acetylation by PCAF/KAT2 at Lys-129, Lys-138, Lys-160 and Lys-162 and PCAF/KAT2 decreases transcriptional activity probably by inhibiting DNA-binding activity; deacetylation involves SIRT1 and HDAC8 and increases DNA-binding.

It is found in the nucleus. The protein localises to the cytoplasm. In terms of biological role, binds to an ERR-alpha response element (ERRE) containing a single consensus half-site, 5'-TNAAGGTCA-3'. Can bind to the medium-chain acyl coenzyme A dehydrogenase (MCAD) response element NRRE-1 and may act as an important regulator of MCAD promoter. May function as a modulator of the estrogen signaling pathway in the uterus. Induces the expression of PERM1 in the skeletal muscle. The chain is Steroid hormone receptor ERR1 (ESRRA) from Canis lupus familiaris (Dog).